Here is a 185-residue protein sequence, read N- to C-terminus: Prorelaxin H1 (185 aa).

The first 22 residues, M1–A22, serve as a signal peptide directing secretion. 3 cysteine pairs are disulfide-bonded: C35/C172, C47/C185, and C171/C176. Residues S56–Q158 constitute a propeptide, connecting peptide.

It belongs to the insulin family. As to quaternary structure, heterodimer of a B chain and an A chain linked by two disulfide bonds. In terms of tissue distribution, prostate. Not expressed in placenta, decidua or ovary.

It localises to the secreted. In terms of biological role, relaxin is an ovarian hormone that acts with estrogen to produce dilatation of the birth canal in many mammals. May be involved in remodeling of connective tissues during pregnancy, promoting growth of pubic ligaments and ripening of the cervix. This chain is Prorelaxin H1 (RLN1), found in Homo sapiens (Human).